A 282-amino-acid chain; its full sequence is Phosphatidylglycerol--prolipoprotein diacylglyceryl transferase (282 aa).

The next 3 membrane-spanning stretches (helical) occupy residues 18–38 (IQVH…VALA), 56–76 (ILWA…IFQW), and 89–109 (IWDG…VVIL). An a 1,2-diacyl-sn-glycero-3-phospho-(1'-sn-glycerol)-binding site is contributed by Arg-137. The chain crosses the membrane as a helical span at residues 237-257 (VIRVSQALSVVLFFGSIGLMI).

This sequence belongs to the Lgt family.

It localises to the cell membrane. The enzyme catalyses L-cysteinyl-[prolipoprotein] + a 1,2-diacyl-sn-glycero-3-phospho-(1'-sn-glycerol) = an S-1,2-diacyl-sn-glyceryl-L-cysteinyl-[prolipoprotein] + sn-glycerol 1-phosphate + H(+). The protein operates within protein modification; lipoprotein biosynthesis (diacylglyceryl transfer). Functionally, catalyzes the transfer of the diacylglyceryl group from phosphatidylglycerol to the sulfhydryl group of the N-terminal cysteine of a prolipoprotein, the first step in the formation of mature lipoproteins. In Lactiplantibacillus plantarum (strain ATCC BAA-793 / NCIMB 8826 / WCFS1) (Lactobacillus plantarum), this protein is Phosphatidylglycerol--prolipoprotein diacylglyceryl transferase.